The sequence spans 1357 residues: DNA-directed RNA polymerase subunit beta (1357 aa).

It belongs to the RNA polymerase beta chain family. As to quaternary structure, the RNAP catalytic core consists of 2 alpha, 1 beta, 1 beta' and 1 omega subunit. When a sigma factor is associated with the core the holoenzyme is formed, which can initiate transcription.

The enzyme catalyses RNA(n) + a ribonucleoside 5'-triphosphate = RNA(n+1) + diphosphate. DNA-dependent RNA polymerase catalyzes the transcription of DNA into RNA using the four ribonucleoside triphosphates as substrates. The polypeptide is DNA-directed RNA polymerase subunit beta (Neorickettsia sennetsu (Ehrlichia sennetsu)).